A 584-amino-acid chain; its full sequence is Hemagglutinin (584 aa).

An N-terminal signal peptide occupies residues 1–15; sequence MKAIIVLLMVVTSNA. The Extracellular segment spans residues 16 to 552; the sequence is DRICTGITSS…LDNHTILLYY (537 aa). Cystine bridges form between Cys-19–Cys-498, Cys-75–Cys-87, Cys-109–Cys-158, and Cys-505–Cys-509. Residues Asn-40 and Asn-74 are each glycosylated (N-linked (GlcNAc...) asparagine; by host). N-linked (GlcNAc...) asparagine; by host glycans are attached at residues Asn-180, Asn-247, Asn-318, Asn-347, Asn-506, Asn-532, and Asn-545. A helical membrane pass occupies residues 553-573; that stretch reads STAASSLAVTLMIAIFIVYMV. The Cytoplasmic portion of the chain corresponds to 574–584; sequence SRDNVSCSICL. S-palmitoyl cysteine; by host attachment occurs at residues Cys-580 and Cys-583.

This sequence belongs to the influenza viruses hemagglutinin family. As to quaternary structure, homotrimer of disulfide-linked HA1-HA2. Palmitoylated. In terms of processing, in natural infection, inactive HA is matured into HA1 and HA2 outside the cell by one or more trypsin-like, arginine-specific endoprotease secreted by the bronchial epithelial cells. One identified protease that may be involved in this process is secreted in lungs by club cells.

It localises to the virion membrane. It is found in the host apical cell membrane. In terms of biological role, binds to sialic acid-containing receptors on the cell surface, bringing about the attachment of the virus particle to the cell. Plays a major role in the determination of host range restriction and virulence. Class I viral fusion protein. Responsible for penetration of the virus into the cell cytoplasm by mediating the fusion of the membrane of the endocytosed virus particle with the endosomal membrane. Low pH in endosomes induce an irreversible conformational change in HA2, releasing the fusion hydrophobic peptide. Several trimers are required to form a competent fusion pore. The protein is Hemagglutinin of Influenza B virus (strain B/Lee/1940).